Here is a 253-residue protein sequence, read N- to C-terminus: Salivary gland SP38-40.B protein (253 aa).

An N-terminal signal peptide occupies residues 1–21 (MRIKFLVVLAVICLLAHYASA). 3 disordered regions span residues 23–51 (GMGGDKKPKDAPKPKDAPKPKEVKPVKAD), 140–168 (KDEKKEKKVVKVIKPPKEKPPKKPRKECS), and 203–253 (VQGK…DAKK). Basic and acidic residues-rich tracts occupy residues 26–51 (GDKKPKDAPKPKDAPKPKEVKPVKAD) and 154–168 (PPKEKPPKKPRKECS). A run of 2 repeats spans residues 29–34 (KPKDAP) and 35–40 (KPKDAP). Residues 29–47 (KPKDAPKPKDAPKPKEVKP) are 3 X 6 AA approximate tandem repeats of K-P-K-D-A-P. A 1-3; approximate repeat occupies 41–47 (KPKEVKP). 2 consecutive repeat copies span residues 153–156 (KPPK) and 158–161 (KPPK). Residues 153-166 (KPPKEKPPKKPRKE) are 3 X 4 AA approximate tandem repeats of K-P-P-K. The stretch at 162-166 (KPRKE) is one 2-3; approximate repeat. Positions 206–217 (KQKKGAKKAKGG) are enriched in basic residues. 6 repeat units span residues 222 to 225 (PKPG), 226 to 229 (PKPA), 230 to 233 (PKPG), 234 to 237 (PKPA), 238 to 241 (PKPV), and 242 to 245 (PKPA). Residues 222–249 (PKPGPKPAPKPGPKPAPKPVPKPADKPK) form a 7 X 4 AA approximate tandem repeats of P-K-P-[GAV] region. The span at 225 to 243 (GPKPAPKPGPKPAPKPVPK) shows a compositional bias: pro residues. The span at 244 to 253 (PADKPKDAKK) shows a compositional bias: basic and acidic residues. A 3-7; approximate repeat occupies 246–249 (DKPK).

As to expression, salivary gland.

The protein localises to the secreted. In terms of biological role, used by the larvae to construct a supramolecular structure, the larval tube. The protein is Salivary gland SP38-40.B protein (SP38-40.B) of Chironomus tentans (Midge).